The sequence spans 100 residues: Small ribosomal subunit protein uS17 (100 aa).

This sequence belongs to the universal ribosomal protein uS17 family. In terms of assembly, part of the 30S ribosomal subunit.

Functionally, one of the primary rRNA binding proteins, it binds specifically to the 5'-end of 16S ribosomal RNA. This is Small ribosomal subunit protein uS17 from Fervidobacterium nodosum (strain ATCC 35602 / DSM 5306 / Rt17-B1).